The primary structure comprises 111 residues: WAP four-disulfide core domain protein 12 (111 aa).

A signal peptide spans 1–23 (MGSSSFLVLMVSLALVTLVAAEG). One can recognise a WAP domain in the interval 27 to 74 (NIEKPGVCPADNIRCIKSDPPQCHTDQDCQGIRKCCYLHCGFKCVIPV). 4 disulfide bridges follow: cysteine 34-cysteine 62, cysteine 41-cysteine 66, cysteine 49-cysteine 61, and cysteine 55-cysteine 70. The tract at residues 80–111 (GGNKDEDVSRPCPEPGWEAKPPGVFSTRCPQK) is disordered.

Its subcellular location is the secreted. Its function is as follows. Antibacterial protein. Putative acid-stable proteinase inhibitor. This Callithrix jacchus (White-tufted-ear marmoset) protein is WAP four-disulfide core domain protein 12 (WFDC12).